Consider the following 459-residue polypeptide: uncharacterized protein (459 aa).

A TRAM domain is found at 5 to 63 (PVEEGQKFPLTIRRMGINGEGIGYFKKAVVFVPGAITGEEVVVEAVKVRDRFTEAKLNK). Residues Cys76, Cys82, Cys85, and Cys166 each contribute to the [4Fe-4S] cluster site. Positions 290, 319, 340, and 388 each coordinate S-adenosyl-L-methionine. Catalysis depends on Cys415, which acts as the Nucleophile.

Belongs to the class I-like SAM-binding methyltransferase superfamily. RNA M5U methyltransferase family.

This is an uncharacterized protein from Listeria monocytogenes serotype 4b (strain F2365).